Reading from the N-terminus, the 471-residue chain is FAD-linked oxidoreductase sorD (471 aa).

The N-terminal stretch at Met-1 to Ala-23 is a signal peptide. N-linked (GlcNAc...) asparagine glycosylation is found at Asn-18, Asn-29, Asn-174, Asn-279, and Asn-351. In terms of domain architecture, FAD-binding PCMH-type spans Leu-41–Val-212.

It belongs to the oxygen-dependent FAD-linked oxidoreductase family. FAD serves as cofactor.

The protein operates within secondary metabolite biosynthesis. In terms of biological role, FAD-linked oxidoreductase; part of the gene cluster that mediates the biosynthesis of sorbicillinoids, a diverse group of yellow secondary metabolites that restrict growth of competing pathogenic fungi but not of bacteria. Sorbicillinoids biosynthesis requires the action of two PKSs. SorA iteratively combines three acetyl units and the growing chain is modified by the ketoacyl reductase subunit, and optional by the enoyl reductase subunit in the second cycle. The polyketide is then handed over to the PKS SorB, which adds three more acetyl units, and two methyl groups. SorB releases an aldehyde, which undergoes spontaneous cyclization resulting in the formation of sorbicillin or 2',3'-dihydrosorbicillin. The monooxygenase sorC oxidizes sorbicillin and 2',3'-dihydrosorbicillin to 2',3'-dihydrosorbicillinol and sorbicillinol, respectively. The oxidoreductase sorD further converts sorbicillinol into oxosorbicillinol. Sorbicillinol is the building block for the other sorbicillinoids such as disorbicillinol, bisvertinolon, and dihydrobisvertinolone. The chain is FAD-linked oxidoreductase sorD from Penicillium rubens (strain ATCC 28089 / DSM 1075 / NRRL 1951 / Wisconsin 54-1255) (Penicillium chrysogenum).